Consider the following 232-residue polypeptide: N-(5'-phosphoribosyl)anthranilate isomerase (232 aa).

The protein belongs to the TrpF family.

It carries out the reaction N-(5-phospho-beta-D-ribosyl)anthranilate = 1-(2-carboxyphenylamino)-1-deoxy-D-ribulose 5-phosphate. Its pathway is amino-acid biosynthesis; L-tryptophan biosynthesis; L-tryptophan from chorismate: step 3/5. This chain is N-(5'-phosphoribosyl)anthranilate isomerase (TRP1), found in Wickerhamomyces anomalus (Yeast).